Reading from the N-terminus, the 974-residue chain is Short transient receptor potential channel 4 (974 aa).

At 1–324 (MAQFYYKRNV…YDEFPGWRRR (324 aa)) the chain is on the cytoplasmic side. 4 ANK repeats span residues 29-60 (LSPSEKAYLNAVEKGDYASVKKSLEEAEIYFK), 71-93 (RTALLIAIENENLELIELLLSFN), 96-118 (VGDALLHAIRKEVVGAVELLLNH), and 141-165 (PDITPIILAAHTNNYEIIKLLVQKG). The multimerization domain stretch occupies residues 87–172 (ELLLSFNVYV…QKGVSVPRPH (86 aa)). Positions 172, 176, 178, and 181 each coordinate Zn(2+). Positions 223–260 (LSWELQELSKVENEFKSEYEELSRQCKQFAKDLLDQTR) form a coiled coil. The segment at 254–304 (DLLDQTRSSRELEIILNYRDDNSLIEEQSGNDLARLKLAIKYRQKEFVAQP) is multimerization domain. An intramembrane region (discontinuously helical) is located at residues 325–359 (HWAVKMVTCFIIGLLFPVFSVCYLIAPKSPLGLFI). The Cytoplasmic portion of the chain corresponds to 360-362 (RKP). A helical transmembrane segment spans residues 363-383 (FIKFICHTASYLTFLFLLLLA). Over 384–403 (SQHIDRSDLNRQGPPPTIVE) the chain is Extracellular. The helical transmembrane segment at 404 to 418 (WMILPWVLGFIWGEI) threads the bilayer. Residues Glu-417, Gln-420, Asn-435, and Asp-438 each contribute to the Ca(2+) site. At 419–432 (KQMWDGGLQDYIHD) the chain is on the cytoplasmic side. A helical membrane pass occupies residues 433 to 453 (WWNLMDFVMNSLYLATISLKI). The Extracellular segment spans residues 454-475 (VAFVKYSALNPRESWDMWHPTL). Residues 476–498 (VAEALFAIANIFSSLRLISLFTA) traverse the membrane as a helical segment. The Cytoplasmic portion of the chain corresponds to 499–511 (NSHLGPLQISLGR). The chain crosses the membrane as a helical span at residues 512–534 (MLLDILKFLFIYCLVLLAFANGL). Over 535-599 (NQLYFYYEET…HEFTEFVGAT (65 aa)) the chain is Extracellular. A disulfide bridge connects residues Cys-549 and Cys-554. A helical membrane pass occupies residues 600–620 (MFGTYNVISLVVLLNMLIAMM). Positions 615–974 (MLIAMMNNSY…AHEDYVTTRL (360 aa)) are interaction with ITPR1, ITPR2 and ITPR3. Over 621 to 974 (NNSYQLIADH…AHEDYVTTRL (354 aa)) the chain is Cytoplasmic. Residues 765-787 (ANAASSADSDEKSQSEGNGKDKR) are disordered. The span at 773-784 (SDEKSQSEGNGK) shows a compositional bias: basic and acidic residues. Tyr-956 and Tyr-969 each carry phosphotyrosine; by FYN. Residues 972–974 (TRL) form a PDZ-binding domain region.

It belongs to the transient receptor (TC 1.A.4) family. STrpC subfamily. TRPC4 sub-subfamily. In terms of assembly, homotetramer. Heterotetramer with TRPC1 and/or TRPC5. Forms a heteromeric ion channel with TRPC1, with a 1:3 TRPC1:TRPC4 stoichiometry. Interacts with TRPC4AP. Isoform alpha but not isoform beta interacts with ITPR1, ITPR2 and ITPR3. Interacts with NHERF1. Interacts with MX1 and RNF24. Interacts (via CIRB domain) with SESTD1 (via the spectrin 1 repeat) and SPTBN5 (via C-terminus). Interacts with CDH5 and CTNNB1. Interacts (via protein 4.1-binding domain) with EPB41L2. Interacts with PLSCR1. Abundantly expressed in brain (hippocampal CA1 pyramidal neurons, dentate gyrus granule cells, and cerebral cortical neurons, and in the septal nuclei and the mitral layer of olfactory bulb). Lower levels are detected in other tissues.

It localises to the cell membrane. The enzyme catalyses Ca(2+)(in) = Ca(2+)(out). It catalyses the reaction Na(+)(in) = Na(+)(out). It carries out the reaction Li(+)(in) = Li(+)(out). The catalysed reaction is Cs(+)(in) = Cs(+)(out). May be operated by a phosphatidylinositol second messenger system activated by receptor tyrosine kinases or G-protein coupled receptors. May be activated by intracellular calcium store depletion. Its function is as follows. Forms a receptor-activated non-selective calcium permeant cation channel. Acts as a cell-cell contact-dependent endothelial calcium entry channel. Forms a homomeric ion channel or a heteromeric ion channel with TRPC1; the heteromeric ion channel has reduced calcium permeability compared to the homomeric channel. Also permeable to monovalent ions including sodium, lithium and cesium ions. This is Short transient receptor potential channel 4 (Trpc4) from Mus musculus (Mouse).